The primary structure comprises 499 residues: Serine/threonine-protein kinase RHS3 (499 aa).

Positions 1–92 are disordered; it reads MLLKPGNKLV…NSSKPHTGGD (92 aa). A compositionally biased stretch (basic and acidic residues) spans 39 to 55; that stretch reads QKQVEQNTKKIEEHQIK. Low complexity predominate over residues 63-85; sequence SNHNVNMSSQSNNSESTSTNNSS. Residues 113–436 form the Protein kinase domain; sequence FRVLKRLGYG…ATEIKQHPFF (324 aa). ATP is bound by residues 119–127 and Lys-144; that span reads LGYGDIGSV. Asp-240 functions as the Proton acceptor in the catalytic mechanism. The AGC-kinase C-terminal domain maps to 437–499; sequence EGVNWALIRG…DPDYIVFEYF (63 aa).

Belongs to the protein kinase superfamily. AGC Ser/Thr protein kinase family. In terms of assembly, interacts with PDPK1/PDK1. Autophosphorylated and phosphorylated by PDPK1/PDK1. As to expression, specifically expressed in root hair cells.

The enzyme catalyses L-seryl-[protein] + ATP = O-phospho-L-seryl-[protein] + ADP + H(+). It carries out the reaction L-threonyl-[protein] + ATP = O-phospho-L-threonyl-[protein] + ADP + H(+). Its activity is regulated as follows. Activated by PDPK1/PDK1. Its function is as follows. Involved in root hair growth and morphogenesis. The polypeptide is Serine/threonine-protein kinase RHS3 (Arabidopsis thaliana (Mouse-ear cress)).